The primary structure comprises 193 residues: Ion-translocating oxidoreductase complex subunit A (193 aa).

6 consecutive transmembrane segments (helical) span residues 5–25 (ILLI…FLGL), 39–59 (IGMG…AYLV), 65–85 (IPLE…AVIV), 102–122 (LLGI…VALL), 134–154 (VLYG…FSAL), and 171–191 (SIAL…TGLV).

It belongs to the NqrDE/RnfAE family. As to quaternary structure, the complex is composed of six subunits: RnfA, RnfB, RnfC, RnfD, RnfE and RnfG.

Its subcellular location is the cell inner membrane. In terms of biological role, part of a membrane-bound complex that couples electron transfer with translocation of ions across the membrane. This chain is Ion-translocating oxidoreductase complex subunit A, found in Glaesserella parasuis serovar 5 (strain SH0165) (Haemophilus parasuis).